A 537-amino-acid polypeptide reads, in one-letter code: Bifunctional purine biosynthesis protein PurH (537 aa).

Positions 8–158 (IPAPDLVPVR…KNHAYVAVVT (151 aa)) constitute an MGS-like domain.

The protein belongs to the PurH family.

The catalysed reaction is (6R)-10-formyltetrahydrofolate + 5-amino-1-(5-phospho-beta-D-ribosyl)imidazole-4-carboxamide = 5-formamido-1-(5-phospho-D-ribosyl)imidazole-4-carboxamide + (6S)-5,6,7,8-tetrahydrofolate. It carries out the reaction IMP + H2O = 5-formamido-1-(5-phospho-D-ribosyl)imidazole-4-carboxamide. It participates in purine metabolism; IMP biosynthesis via de novo pathway; 5-formamido-1-(5-phospho-D-ribosyl)imidazole-4-carboxamide from 5-amino-1-(5-phospho-D-ribosyl)imidazole-4-carboxamide (10-formyl THF route): step 1/1. It functions in the pathway purine metabolism; IMP biosynthesis via de novo pathway; IMP from 5-formamido-1-(5-phospho-D-ribosyl)imidazole-4-carboxamide: step 1/1. The protein is Bifunctional purine biosynthesis protein PurH of Chelativorans sp. (strain BNC1).